Reading from the N-terminus, the 522-residue chain is Bifunctional purine biosynthesis protein PurH (522 aa).

One can recognise an MGS-like domain in the interval 1–143 (MIRRALISVS…KNHARVAVVV (143 aa)).

The protein belongs to the PurH family.

The catalysed reaction is (6R)-10-formyltetrahydrofolate + 5-amino-1-(5-phospho-beta-D-ribosyl)imidazole-4-carboxamide = 5-formamido-1-(5-phospho-D-ribosyl)imidazole-4-carboxamide + (6S)-5,6,7,8-tetrahydrofolate. It carries out the reaction IMP + H2O = 5-formamido-1-(5-phospho-D-ribosyl)imidazole-4-carboxamide. It functions in the pathway purine metabolism; IMP biosynthesis via de novo pathway; 5-formamido-1-(5-phospho-D-ribosyl)imidazole-4-carboxamide from 5-amino-1-(5-phospho-D-ribosyl)imidazole-4-carboxamide (10-formyl THF route): step 1/1. Its pathway is purine metabolism; IMP biosynthesis via de novo pathway; IMP from 5-formamido-1-(5-phospho-D-ribosyl)imidazole-4-carboxamide: step 1/1. In Sorangium cellulosum (strain So ce56) (Polyangium cellulosum (strain So ce56)), this protein is Bifunctional purine biosynthesis protein PurH.